We begin with the raw amino-acid sequence, 335 residues long: DNA-directed RNA polymerase subunit alpha (335 aa).

The interval 1 to 248 (MTIQTSRTLS…GLFAPLQEVS (248 aa)) is alpha N-terminal domain (alpha-NTD). Residues 256–335 (KPDEDNQKNQ…LPRTREKGKA (80 aa)) form an alpha C-terminal domain (alpha-CTD) region.

This sequence belongs to the RNA polymerase alpha chain family. As to quaternary structure, in cyanobacteria the RNAP catalytic core is composed of 2 alpha, 1 beta, 1 beta', 1 gamma and 1 omega subunit. When a sigma factor is associated with the core the holoenzyme is formed, which can initiate transcription.

It catalyses the reaction RNA(n) + a ribonucleoside 5'-triphosphate = RNA(n+1) + diphosphate. Its function is as follows. DNA-dependent RNA polymerase catalyzes the transcription of DNA into RNA using the four ribonucleoside triphosphates as substrates. The sequence is that of DNA-directed RNA polymerase subunit alpha from Synechococcus sp. (strain JA-2-3B'a(2-13)) (Cyanobacteria bacterium Yellowstone B-Prime).